The chain runs to 462 residues: Argininosuccinate lyase (462 aa).

It belongs to the lyase 1 family. Argininosuccinate lyase subfamily.

The protein resides in the cytoplasm. The enzyme catalyses 2-(N(omega)-L-arginino)succinate = fumarate + L-arginine. Its pathway is amino-acid biosynthesis; L-arginine biosynthesis; L-arginine from L-ornithine and carbamoyl phosphate: step 3/3. The polypeptide is Argininosuccinate lyase (Thermus thermophilus (strain ATCC BAA-163 / DSM 7039 / HB27)).